The primary structure comprises 68 residues: Antimicrobial peptide Eval418 (68 aa).

The N-terminal stretch at 1-23 (MRTQLAVLLVALVLLQMIAQSEA) is a signal peptide. The residue at position 36 (Ile-36) is an Isoleucine amide. Positions 37 to 68 (GKRGLRNLDDLDDVFDDDLSAADLEFLKQLMR) are excised as a propeptide.

This sequence belongs to the non-disulfide-bridged peptide (NDBP) superfamily. Short antimicrobial peptide (group 4) family. In terms of tissue distribution, expressed by the venom gland.

It localises to the secreted. Probable antimicrobial peptide. Shows dose-dependent and time-dependent inactivation of herpes simplex virus type 1 (HSV-1) and dose-dependent inhibition of HSV-1 viral attachment to host cells. Scarcely suppress an established HSV-1 infection due to poor cellular uptake. The sequence is that of Antimicrobial peptide Eval418 from Euscorpiops validus (Scorpion).